Reading from the N-terminus, the 23-residue chain is NVQLDPFFQEQQQYYQQQQAFFL.

The polypeptide is Prolamin alpha-3 (Dactylis glomerata (Orchard grass)).